Here is a 462-residue protein sequence, read N- to C-terminus: GTPase Der (462 aa).

EngA-type G domains lie at 3-166 and 175-348; these read PVIA…ITEM and IKIA…HSAI. GTP-binding positions include 9–16, 56–60, 118–121, 181–188, 228–232, and 293–296; these read GRPNVGKS, DTGGI, NKTD, DTAGV, and NKWD. The region spanning 349–433 is the KH-like domain; it reads QSFSTPKLTR…PLKIEFKGGQ (85 aa).

It belongs to the TRAFAC class TrmE-Era-EngA-EngB-Septin-like GTPase superfamily. EngA (Der) GTPase family. As to quaternary structure, associates with the 50S ribosomal subunit.

GTPase that plays an essential role in the late steps of ribosome biogenesis. This Legionella pneumophila (strain Lens) protein is GTPase Der.